A 979-amino-acid chain; its full sequence is Collagen alpha-2(I) chain (979 aa).

Residues 1 to 979 (SGGFDFSFLP…FGYEGDFYRA (979 aa)) form a disordered region. 4 positions are modified to 4-hydroxyproline: proline 10, proline 13, proline 38, and proline 44. Over residues 24 to 70 (LGPGPMGLMGPRGPPGASGAPGPQGFQGPAGEPGEPGQTGPAGARGP) the composition is skewed to low complexity. Lysine 99 carries the 5-hydroxylysine; alternate modification. Lysine 99 carries an O-linked (Gal...) hydroxylysine; alternate glycan. Composition is skewed to low complexity over residues 147 to 176 (VGAP…SAGP), 222 to 263 (PGAN…AGSK), 272 to 282 (SAGPQGPPGSS), and 312 to 331 (RAGV…AGVR). 4-hydroxyproline is present on residues proline 334 and proline 337. Positions 363–382 (LPGIDGRPGPIGPAGARGEA) are enriched in low complexity. The span at 427–436 (GVQGGKGEQG) shows a compositional bias: gly residues. Positions 483-500 (PGESGAVGPSGAIGSRGP) are enriched in low complexity. Gly residues predominate over residues 517-527 (GAPGGSGGLPG). 2 stretches are compositionally biased toward low complexity: residues 550 to 594 (VGTT…PRGS) and 601 to 621 (VGPA…QPGA). Over residues 622–631 (KGERGTKGPK) the composition is skewed to basic and acidic residues. Over residues 639 to 649 (PTGPVGSAGPA) the composition is skewed to low complexity. Gly residues predominate over residues 659–668 (GSRGDGGPPG). The segment covering 669 to 679 (ATGFPGAAGRT) has biased composition (low complexity). Positions 710 to 724 (GPVGRGETGAGGPPG) are enriched in gly residues. Low complexity-rich tracts occupy residues 725-759 (FTGE…LGLP) and 767-777 (LPGVAGAVGEP). Residues 778–788 (GPLGIGPPGAR) show a composition bias toward gly residues. The segment covering 840 to 855 (EPGPVGSVGPVGALGP) has biased composition (low complexity). Positions 865–876 (RGDKGEPGDKGP) are enriched in basic and acidic residues. The segment covering 949 to 961 (SGPPGPPGPPGPP) has biased composition (pro residues).

It belongs to the fibrillar collagen family. Trimers of one alpha 2(I) and two alpha 1(I) chains. Interacts (via C-terminus) with TMEM131 (via PapD-L domain); the interaction is direct and is involved in assembly and TRAPPIII ER-to-Golgi transport complex-dependent secretion of collagen. Prolines at the third position of the tripeptide repeating unit (G-X-Y) are hydroxylated in some or all of the chains. In terms of tissue distribution, expressed in bones.

The protein localises to the secreted. Its subcellular location is the extracellular space. The protein resides in the extracellular matrix. Functionally, type I collagen is a member of group I collagen (fibrillar forming collagen). This chain is Collagen alpha-2(I) chain, found in Bradypus variegatus (Brown-throated three-fingered sloth).